The following is a 567-amino-acid chain: Glutamate--tRNA ligase (567 aa).

A 'HIGH' region motif is present at residues 106 to 116 (PNPDGPLHLGN).

It belongs to the class-I aminoacyl-tRNA synthetase family. Glutamate--tRNA ligase type 2 subfamily.

Its subcellular location is the cytoplasm. The enzyme catalyses tRNA(Glu) + L-glutamate + ATP = L-glutamyl-tRNA(Glu) + AMP + diphosphate. Catalyzes the attachment of glutamate to tRNA(Glu) in a two-step reaction: glutamate is first activated by ATP to form Glu-AMP and then transferred to the acceptor end of tRNA(Glu). This Sulfolobus acidocaldarius (strain ATCC 33909 / DSM 639 / JCM 8929 / NBRC 15157 / NCIMB 11770) protein is Glutamate--tRNA ligase.